The sequence spans 143 residues: Mediator of RNA polymerase II transcription subunit 10 (143 aa).

A disordered region spans residues 123–143 (GAHSNTEISTNPGQKRQGNVS). The span at 124–143 (AHSNTEISTNPGQKRQGNVS) shows a compositional bias: polar residues.

This sequence belongs to the Mediator complex subunit 10 family. Component of the Mediator complex.

Its subcellular location is the nucleus. Component of the Mediator complex, a coactivator involved in the regulated transcription of nearly all RNA polymerase II-dependent genes. Mediator functions as a bridge to convey information from gene-specific regulatory proteins to the basal RNA polymerase II transcription machinery. Mediator is recruited to promoters by direct interactions with regulatory proteins and serves as a scaffold for the assembly of a functional preinitiation complex with RNA polymerase II and the general transcription factors. This Yarrowia lipolytica (strain CLIB 122 / E 150) (Yeast) protein is Mediator of RNA polymerase II transcription subunit 10 (NUT2).